Here is a 1507-residue protein sequence, read N- to C-terminus: Transient receptor potential cation channel subfamily M member 2 (1507 aa).

Residues 1 to 11 (MEPLDQRRTDS) show a composition bias toward basic and acidic residues. A disordered region spans residues 1–24 (MEPLDQRRTDSDQEEGFGVQSRRA). The Cytoplasmic segment spans residues 1 to 751 (MEPLDQRRTD…WWGQLCVDNG (751 aa)). Residues Thr173, Asn178, Arg301, Gly332, and Thr335 each contribute to the ADP-D-ribose site. Residue Thr739 is modified to Phosphothreonine. Residues 752–768 (LWRIILCMLAFPLLFTG) lie within the membrane without spanning it. Residues 769–793 (FISFREKRLQALCRLARVRAFFNAP) lie on the Cytoplasmic side of the membrane. Residues 794–814 (VVIFYLNILSYFAFLCLFAYV) form a helical membrane-spanning segment. Topologically, residues 815-825 (LMVDFQPSPSW) are extracellular. Residues 826–846 (CEYLIYLWLFSLVCEETRQLF) form a helical membrane-spanning segment. Positions 841 and 844 each coordinate Ca(2+). The Cytoplasmic portion of the chain corresponds to 847–865 (YDPDGCGLMKMASLYFSDF). The chain crosses the membrane as a helical span at residues 866–886 (WNKLDVGAILLFIAGLTCRLI). Residue Asn867 participates in Ca(2+) binding. Residues 887–894 (PATLYPGR) lie on the Extracellular side of the membrane. A helical transmembrane segment spans residues 895–915 (IILSLDFIMFCLRLMHIFTIS). Topologically, residues 916–927 (KTLGPKIIIVKR) are cytoplasmic. The helical transmembrane segment at 928-948 (MMKDVFFFLFLLAVWVVSFGV) threads the bilayer. Residues 949–968 (AKQAILIHNESRVDWIFRGV) lie on the Extracellular side of the membrane. Positions 969–983 (IYHSYLTIFGQIPTY) form an intramembrane region, pore-forming. The Selectivity filter motif lies at 977 to 980 (FGQI). Over 984 to 1020 (IDGVNFSMDQCSPNGTDPYKPKCPESDWTGQAPAFPE) the chain is Extracellular. A disulfide bridge connects residues Cys994 and Cys1006. The chain crosses the membrane as a helical span at residues 1021-1042 (WLTVTLLCLYLLFANILLLNLL). Residues 1043 to 1077 (IAMFNYTFQEVQEHTDQIWKFQRHDLIEEYHGRPP) lie on the Cytoplasmic side of the membrane. Position 1071 (Glu1071) interacts with Ca(2+). An intramembrane segment occupies 1078–1096 (APPPLILLSHLQLLIKRIV). Topologically, residues 1097–1507 (LKIPAKRHKQ…KVASLFGAHF (411 aa)) are cytoplasmic. The Nudix hydrolase domain occupies 1351-1502 (RWKRNQGGGI…KKILQKVASL (152 aa)). Ser1379 contacts ADP-D-ribose. The short motif at 1387–1408 (GSREPGKMLPRKLKQVLQQEYW) is the Nudix box element. ADP-D-ribose contacts are provided by Asp1428, Arg1430, Tyr1489, and Asn1491.

Belongs to the transient receptor (TC 1.A.4) family. LTrpC subfamily. TRPM2 sub-subfamily. In terms of assembly, homotetramer. Phosphorylation of TRPM2 at Thr-739 by protein kinase C (PKC) counteracts the effect of cytosolic Ca(2+) and elevates the temperature threshold. In terms of tissue distribution, detected in pancreas beta-cells. Detected in fetal brain cortex neurons (at protein level).

The protein localises to the cell membrane. Its subcellular location is the perikaryon. The protein resides in the cell projection. It is found in the cytoplasmic vesicle. It localises to the lysosome. The enzyme catalyses Ca(2+)(in) = Ca(2+)(out). The catalysed reaction is Na(+)(in) = Na(+)(out). Activated by intracellular ADP-ribose, beta-NAD (NAD(+)) and similar compounds, and by oxidative stress caused by reactive oxygen or nitrogen species. Ca(2+) and PI(4,5)P2 are required for channel opening by ADP-ribose. Activation by ADP-ribose and beta-NAD is strongly increased by moderate heat (35 to 40 degrees Celsius). Likewise, reactive oxygen species lower the threshold for activation by moderate heat (37 degrees Celsius). Activated by moderate heat (35 to 40 degrees Celsius). Inactivated by exposure to extracellular pH between 4.0 and 6.5; irreversibly inactivated when open channels are exposed to extracellular pH between 4.0 and 6.5, while pre-exposure of closed channels to extracellular pH 5.5 gives rise to currents that rapidly inactivate, but protects against irreversible inactivation. Inactivated by intracellular ATP. Activated by arachidonic acid. Inhibited by 2-aminoethyl diphenylborinate (2-APB). In terms of biological role, nonselective, voltage-independent cation channel that mediates Na(+) and Ca(2+) influx, leading to increased cytoplasmic Ca(2+) levels. Functions as a ligand-gated ion channel gated by intracellular adenosine diphosphate ribose (ADP-ribose), Ca(2+), warm temperature, and oxidative stress. The precise physiological activators are under debate; the true, physiological activators may be ADP-ribose and ADP-ribose-2'-phosphate. Binding of ADP-ribose to the cytoplasmic Nudix domain causes a conformation change; the channel is primed but still requires Ca(2+) binding to trigger channel opening. Extracellular Ca(2+) passes through the channel and increases channel activity. Also contributes to Ca(2+) release from intracellular stores in response to ADP-ribose. Plays a role in numerous processes that involve signaling via intracellular Ca(2+) levels. Besides, mediates the release of lysosomal Zn(2+) stores in response to reactive oxygen species, leading to increased cytosolic Zn(2+) levels. Plays a role in insulin secretion, a process that requires increased cytoplasmic Ca(2+) levels. Required for normal IFNG and cytokine secretion and normal innate immune immunity in response to bacterial infection. Required for normal phagocytosis and cytokine release by macrophages exposed to zymosan (in vitro). Plays a role in dendritic cell differentiation and maturation, and in dendritic cell chemotaxis via its role in regulating cytoplasmic Ca(2+) levels. Plays a role in the regulation of the reorganization of the actin cytoskeleton and filopodia formation in response to reactive oxygen species via its function in increasing cytoplasmic Ca(2+) and Zn(2+) levels. Confers susceptibility to cell death following oxidative stress. This chain is Transient receptor potential cation channel subfamily M member 2, found in Rattus norvegicus (Rat).